Consider the following 147-residue polypeptide: Ubiquitin-conjugating enzyme E2 D4 (147 aa).

One can recognise a UBC core domain in the interval 1-147; sequence MALKRIQKEL…AREWTQKYAM (147 aa). C85 (glycyl thioester intermediate) is an active-site residue.

The protein belongs to the ubiquitin-conjugating enzyme family. In terms of assembly, interacts with map3k10/mlk2. In terms of tissue distribution, at embryonic stages 28 to 35, expressed in the somites, eye primordia, otic vesicle and branchial arches. By stage 35, also weakly expressed in the pronephros.

The catalysed reaction is S-ubiquitinyl-[E1 ubiquitin-activating enzyme]-L-cysteine + [E2 ubiquitin-conjugating enzyme]-L-cysteine = [E1 ubiquitin-activating enzyme]-L-cysteine + S-ubiquitinyl-[E2 ubiquitin-conjugating enzyme]-L-cysteine.. It participates in protein modification; protein ubiquitination. Catalyzes the covalent attachment of ubiquitin to other proteins. Regulates pronephros development, possibly by promoting ubiquitination and thus inactivation or degradation of map3k10/mlk2. The chain is Ubiquitin-conjugating enzyme E2 D4 (ube2d4) from Xenopus laevis (African clawed frog).